A 182-amino-acid polypeptide reads, in one-letter code: CASP-like protein 2B1 (182 aa).

Topologically, residues 1–12 (MKLIDRRMRLTE) are cytoplasmic. The helical transmembrane segment at 13 to 31 (LLLRCSISVFALLALILVV) threads the bilayer. Residues 32-52 (TDTEVKLIFTIKKTAKYTDMK) lie on the Extracellular side of the membrane. The chain crosses the membrane as a helical span at residues 53–73 (AVVFLVVANGIAAVYSLLQSV). Over 74 to 89 (RCVVGTMKGKVLFSKP) the chain is Cytoplasmic. The helical transmembrane segment at 90 to 110 (LAWAFFSGDQAMAYLNVAAIA) threads the bilayer. The Extracellular portion of the chain corresponds to 111–141 (ATAESGVIAREGEEDLQWMRVCTMYGKFCNQ). A helical membrane pass occupies residues 142–162 (MAIGVSSALLASIAMVFVSCI). Residues 163–182 (SAFSLFRLYGATKDRRTTPW) lie on the Cytoplasmic side of the membrane.

Belongs to the Casparian strip membrane proteins (CASP) family. As to quaternary structure, homodimer and heterodimers.

The protein resides in the cell membrane. The sequence is that of CASP-like protein 2B1 from Arabidopsis thaliana (Mouse-ear cress).